A 187-amino-acid chain; its full sequence is Adenine phosphoribosyltransferase (187 aa).

Belongs to the purine/pyrimidine phosphoribosyltransferase family. In terms of assembly, homodimer.

The protein localises to the cytoplasm. The catalysed reaction is AMP + diphosphate = 5-phospho-alpha-D-ribose 1-diphosphate + adenine. It participates in purine metabolism; AMP biosynthesis via salvage pathway; AMP from adenine: step 1/1. In terms of biological role, catalyzes a salvage reaction resulting in the formation of AMP, that is energically less costly than de novo synthesis. In Yersinia pseudotuberculosis serotype O:3 (strain YPIII), this protein is Adenine phosphoribosyltransferase.